The following is a 149-amino-acid chain: MSSNLRPLFWTLPLTRLTPAEWEALCDGCGKCCLNKLEYEDTGELEFTRVACRLLDGESCRCRNYEIRHQFVPECVRLTPKSLKKSVYWMPATCAYRLRYEGRPLEPWHYLISGDPETVHDAGQSVRGWTVSEAEVPEEDWQDYIIEDL.

This sequence belongs to the UPF0260 family.

The polypeptide is UPF0260 protein RCAP_rcc02083 (Rhodobacter capsulatus (strain ATCC BAA-309 / NBRC 16581 / SB1003)).